The sequence spans 243 residues: 2-C-methyl-D-erythritol 4-phosphate cytidylyltransferase (243 aa).

Belongs to the IspD/TarI cytidylyltransferase family. IspD subfamily.

It carries out the reaction 2-C-methyl-D-erythritol 4-phosphate + CTP + H(+) = 4-CDP-2-C-methyl-D-erythritol + diphosphate. The protein operates within isoprenoid biosynthesis; isopentenyl diphosphate biosynthesis via DXP pathway; isopentenyl diphosphate from 1-deoxy-D-xylulose 5-phosphate: step 2/6. Catalyzes the formation of 4-diphosphocytidyl-2-C-methyl-D-erythritol from CTP and 2-C-methyl-D-erythritol 4-phosphate (MEP). The polypeptide is 2-C-methyl-D-erythritol 4-phosphate cytidylyltransferase (Colwellia psychrerythraea (strain 34H / ATCC BAA-681) (Vibrio psychroerythus)).